A 219-amino-acid chain; its full sequence is Proteasome subunit beta type-9 (219 aa).

The propeptide at 1–20 is removed in mature form; sequence MLRAGAPTAGSFRTEEVHTG. The active-site Nucleophile is the T21. N6-acetyllysine occurs at positions 53 and 109.

The protein belongs to the peptidase T1B family. The 26S proteasome consists of a 20S proteasome core and two 19S regulatory subunits. The 20S proteasome core is composed of 28 subunits that are arranged in four stacked rings, resulting in a barrel-shaped structure. The two end rings are each formed by seven alpha subunits, and the two central rings are each formed by seven beta subunits. The catalytic chamber with the active sites is on the inside of the barrel. Component of the immunoproteasome, where it displaces the equivalent housekeeping subunit PSMB6. Component of the spermatoproteasome, a form of the proteasome specifically found in testis. In terms of processing, autocleaved. The resulting N-terminal Thr residue of the mature subunit is responsible for the nucleophile proteolytic activity.

The protein localises to the cytoplasm. It is found in the nucleus. The catalysed reaction is Cleavage of peptide bonds with very broad specificity.. Functionally, the proteasome is a multicatalytic proteinase complex which is characterized by its ability to cleave peptides with Arg, Phe, Tyr, Leu, and Glu adjacent to the leaving group at neutral or slightly basic pH. The proteasome has an ATP-dependent proteolytic activity. This subunit is involved in antigen processing to generate class I binding peptides. The protein is Proteasome subunit beta type-9 (Psmb9) of Mus terricolor (Earth-colored mouse).